Here is a 345-residue protein sequence, read N- to C-terminus: Uroporphyrinogen decarboxylase (345 aa).

Substrate is bound by residues 24–28 (RQAGR), D74, Y150, S205, and H318.

The protein belongs to the uroporphyrinogen decarboxylase family. As to quaternary structure, homodimer.

The protein localises to the cytoplasm. The enzyme catalyses uroporphyrinogen III + 4 H(+) = coproporphyrinogen III + 4 CO2. The protein operates within porphyrin-containing compound metabolism; protoporphyrin-IX biosynthesis; coproporphyrinogen-III from 5-aminolevulinate: step 4/4. Functionally, catalyzes the decarboxylation of four acetate groups of uroporphyrinogen-III to yield coproporphyrinogen-III. The sequence is that of Uroporphyrinogen decarboxylase from Dichelobacter nodosus (strain VCS1703A).